The primary structure comprises 235 residues: Cobalt transport protein CbiM (235 aa).

The first 33 residues, 1–33 (MRYLKFFLLLVFLVPSFGFSMHIMEGFLPPTHA), serve as a signal peptide directing secretion. A run of 6 helical transmembrane segments spans residues 34–51 (LIWY…LFTI), 63–83 (MLLA…IPSV), 95–115 (LGAI…VLLF), 118–138 (LLLA…MAIV), 156–176 (NIAV…TTSF), and 199–219 (IFAI…VVVI).

It belongs to the CbiM family. As to quaternary structure, forms an energy-coupling factor (ECF) transporter complex composed of an ATP-binding protein (A component, CbiO), a transmembrane protein (T component, CbiQ) and 2 possible substrate-capture proteins (S components, CbiM and CbiN) of unknown stoichimetry.

The protein localises to the cell inner membrane. It functions in the pathway cofactor biosynthesis; adenosylcobalamin biosynthesis. Its function is as follows. Part of the energy-coupling factor (ECF) transporter complex CbiMNOQ involved in cobalt import. This chain is Cobalt transport protein CbiM, found in Thermosipho melanesiensis (strain DSM 12029 / CIP 104789 / BI429).